The following is an 815-amino-acid chain: 1,4-alpha-glucan branching enzyme GlgB (815 aa).

D405 serves as the catalytic Nucleophile. The active-site Proton donor is the E458.

This sequence belongs to the glycosyl hydrolase 13 family. GlgB subfamily. In terms of assembly, monomer.

The catalysed reaction is Transfers a segment of a (1-&gt;4)-alpha-D-glucan chain to a primary hydroxy group in a similar glucan chain.. It functions in the pathway glycan biosynthesis; glycogen biosynthesis. In terms of biological role, catalyzes the formation of the alpha-1,6-glucosidic linkages in glycogen by scission of a 1,4-alpha-linked oligosaccharide from growing alpha-1,4-glucan chains and the subsequent attachment of the oligosaccharide to the alpha-1,6 position. In Histophilus somni (strain 2336) (Haemophilus somnus), this protein is 1,4-alpha-glucan branching enzyme GlgB.